The chain runs to 804 residues: Enhancer of polycomb homolog 2 (804 aa).

Disordered regions lie at residues 372–398 (QSSD…PDGS), 484–507 (GFSS…SDRH), 602–623 (QQSQ…KSDC), and 642–669 (NSPT…VQPS). The span at 602–611 (QQSQQSLQQS) shows a compositional bias: low complexity. The span at 654–669 (DQNAGHSNLNGVVQPS) shows a compositional bias: polar residues.

It belongs to the enhancer of polycomb family.

The protein localises to the nucleus. Its function is as follows. May play a role in transcription or DNA repair. In Xenopus tropicalis (Western clawed frog), this protein is Enhancer of polycomb homolog 2 (epc2).